The primary structure comprises 206 residues: Holliday junction branch migration complex subunit RuvA (206 aa).

Residues 1 to 64 (MIGRLSGTIL…EDAQLLYGFN (64 aa)) form a domain I region. Residues 65–143 (KKSERELFRE…GWGEGDLFTP (79 aa)) form a domain II region. A flexible linker region spans residues 144 to 157 (ASDAAASNAEIQKY). The domain III stretch occupies residues 158 to 206 (SSARAEDEAVSALIALGYKALQAAKVVSQVVKPEMSSENIIREALRSMV).

Belongs to the RuvA family. As to quaternary structure, homotetramer. Forms an RuvA(8)-RuvB(12)-Holliday junction (HJ) complex. HJ DNA is sandwiched between 2 RuvA tetramers; dsDNA enters through RuvA and exits via RuvB. An RuvB hexamer assembles on each DNA strand where it exits the tetramer. Each RuvB hexamer is contacted by two RuvA subunits (via domain III) on 2 adjacent RuvB subunits; this complex drives branch migration. In the full resolvosome a probable DNA-RuvA(4)-RuvB(12)-RuvC(2) complex forms which resolves the HJ.

Its subcellular location is the cytoplasm. In terms of biological role, the RuvA-RuvB-RuvC complex processes Holliday junction (HJ) DNA during genetic recombination and DNA repair, while the RuvA-RuvB complex plays an important role in the rescue of blocked DNA replication forks via replication fork reversal (RFR). RuvA specifically binds to HJ cruciform DNA, conferring on it an open structure. The RuvB hexamer acts as an ATP-dependent pump, pulling dsDNA into and through the RuvAB complex. HJ branch migration allows RuvC to scan DNA until it finds its consensus sequence, where it cleaves and resolves the cruciform DNA. This chain is Holliday junction branch migration complex subunit RuvA, found in Photobacterium profundum (strain SS9).